Reading from the N-terminus, the 230-residue chain is Ion-translocating oxidoreductase complex subunit E (230 aa).

A run of 6 helical transmembrane segments spans residues 18–38, 39–59, 63–83, 86–106, 125–145, and 182–202; these read ALVQLLGLCPLLAVTSTATNA, LGLGLATTLVLTLTNLTVSAL, TPAEIRIPIYVMIIASVVSAV, LINAYAFGLYQSLGIFIPLIV, WLSALDGFSIGMGATGAMFVL, and PFLLAMLPPGAFIGLGLMLAV.

Belongs to the NqrDE/RnfAE family. The complex is composed of six subunits: RsxA, RsxB, RsxC, RsxD, RsxE and RsxG.

It is found in the cell inner membrane. Functionally, part of a membrane-bound complex that couples electron transfer with translocation of ions across the membrane. Required to maintain the reduced state of SoxR. The protein is Ion-translocating oxidoreductase complex subunit E of Salmonella agona (strain SL483).